We begin with the raw amino-acid sequence, 187 residues long: GTP cyclohydrolase 1 (187 aa).

Residues C76, H79, and C148 each contribute to the Zn(2+) site.

Belongs to the GTP cyclohydrolase I family. In terms of assembly, homomer.

It catalyses the reaction GTP + H2O = 7,8-dihydroneopterin 3'-triphosphate + formate + H(+). It functions in the pathway cofactor biosynthesis; 7,8-dihydroneopterin triphosphate biosynthesis; 7,8-dihydroneopterin triphosphate from GTP: step 1/1. In Streptococcus gordonii (strain Challis / ATCC 35105 / BCRC 15272 / CH1 / DL1 / V288), this protein is GTP cyclohydrolase 1.